The following is a 101-amino-acid chain: Urease subunit beta (101 aa).

This sequence belongs to the urease beta subunit family. Heterotrimer of UreA (gamma), UreB (beta) and UreC (alpha) subunits. Three heterotrimers associate to form the active enzyme.

It localises to the cytoplasm. The enzyme catalyses urea + 2 H2O + H(+) = hydrogencarbonate + 2 NH4(+). It functions in the pathway nitrogen metabolism; urea degradation; CO(2) and NH(3) from urea (urease route): step 1/1. In Rhizobium rhizogenes (strain K84 / ATCC BAA-868) (Agrobacterium radiobacter), this protein is Urease subunit beta.